A 350-amino-acid chain; its full sequence is Cytosolic sulfotransferase 18 (350 aa).

The residue at position 1 (M1) is an N-acetylmethionine. Low complexity predominate over residues 1–17 (MESETLTAKATITTTTL). Residues 1-28 (MESETLTAKATITTTTLPSHDETKTEST) are disordered. Residues 19-28 (SHDETKTEST) are compositionally biased toward basic and acidic residues. Residue 93-98 (KTGTTW) participates in 3'-phosphoadenylyl sulfate binding. The active-site Proton acceptor is the H155. Residues R177, S185, Y243, and 313 to 315 (RKG) contribute to the 3'-phosphoadenylyl sulfate site.

Belongs to the sulfotransferase 1 family. As to expression, expressed in roots, leaves and stems. Barely detected in siliques and flowers.

The protein resides in the cytoplasm. It carries out the reaction an aliphatic (Z)-desulfo-glucosinolate + 3'-phosphoadenylyl sulfate = a (Z)-omega-(methylsulfanyl)-N-sulfo-alkylhydroximate S-glucoside + adenosine 3',5'-bisphosphate + H(+). Inhibited by phosphoadenosine 5'-phosphate (PAP). Functionally, sulfotransferase that utilizes 3'-phospho-5'-adenylyl sulfate (PAPS) as sulfonate donor to catalyze the sulfate conjugation of desulfo-glucosinolates (dsGSs), the final step in the biosynthesis of the glucosinolate core structure. Preferred substrate are the long-chain desulfo-glucosinolates, 7-methylthioheptyl and 8-methylthiooctyl, derived from methionine. Substrate preference is desulfo-benzyl glucosinolate &gt; desulfo-4-methylthiobutyl glucosinolate &gt; desulfo-6-methylthiohexyl glucosinolate &gt; desulfo-3-methylthiopropyl glucosinolate &gt; desulfo-indol-3-yl methyl glucosinolate &gt; desulfo-singrin &gt; desulfo-3-butenyl glucosinolate. In Arabidopsis thaliana (Mouse-ear cress), this protein is Cytosolic sulfotransferase 18 (SOT18).